We begin with the raw amino-acid sequence, 327 residues long: COP9 signalosome complex subunit 7 (327 aa).

Positions 4–165 (VHHRALDALQ…NPPTVNVTSV (162 aa)) constitute a PCI domain. 2 disordered regions span residues 233-260 (GGEQ…AGWK) and 276-327 (GGSN…GKKS). The segment covering 236-255 (QLQGGNPGQGQGQGQGGLGK) has biased composition (gly residues). The span at 315-327 (GARHSKRFLGKKS) shows a compositional bias: basic residues.

Belongs to the CSN7/EIF3M family. CSN7 subfamily. In terms of assembly, component of the COP9 signalosome (CSN) complex. Present in uninduced vegetative hyphae, induced conidiating cultures and in both conidiospores and ascospores.

The protein localises to the cytoplasm. The protein resides in the nucleus. Component of the COP9 signalosome (CSN) complex that acts as an regulator of the ubiquitin (Ubl) conjugation pathway by mediating the deneddylation of the cullin subunit of SCF-type E3 ubiquitin-protein ligase complexes. The CSN complex seems to link protein degradation to sexual development. May be required for sporulation only at elevated temperatures. In Emericella nidulans (strain FGSC A4 / ATCC 38163 / CBS 112.46 / NRRL 194 / M139) (Aspergillus nidulans), this protein is COP9 signalosome complex subunit 7 (csnG).